A 785-amino-acid polypeptide reads, in one-letter code: Ribosome biogenesis protein BOP1 homolog (785 aa).

Residues 1-11 (MTKKLTIKRKV) show a composition bias toward basic residues. The segment at 1–160 (MTKKLTIKRK…DSDTSDEEDI (160 aa)) is disordered. 3 stretches are compositionally biased toward acidic residues: residues 45 to 54 (EDSTDDEGID), 61 to 73 (SSED…DEEG), and 85 to 102 (SGDD…EDDA). The span at 103-112 (DAKKSSKNND) shows a compositional bias: basic and acidic residues. A compositionally biased stretch (acidic residues) spans 150 to 159 (ADSDTSDEED). 7 WD repeats span residues 446–487 (GHTD…RTIE), 489–527 (EDVV…KLLV), 571–613 (THFK…SQIP), 616–654 (KSKG…LIKK), 657–696 (TNSK…KPYQ), 700–739 (LHRN…DLLQ), and 755–785 (REEF…RLFT).

This sequence belongs to the WD repeat BOP1/ERB1 family.

The protein localises to the nucleus. Its subcellular location is the nucleolus. The protein resides in the nucleoplasm. Its function is as follows. Required for maturation of ribosomal RNAs and formation of the large ribosomal subunit. This Drosophila persimilis (Fruit fly) protein is Ribosome biogenesis protein BOP1 homolog.